Reading from the N-terminus, the 423-residue chain is Probable M18 family aminopeptidase 2 (423 aa).

His84, His157, and His397 together coordinate Zn(2+).

Belongs to the peptidase M18 family. It depends on Zn(2+) as a cofactor.

The protein is Probable M18 family aminopeptidase 2 (apeB) of Borreliella burgdorferi (strain ATCC 35210 / DSM 4680 / CIP 102532 / B31) (Borrelia burgdorferi).